The primary structure comprises 299 residues: Taste receptor type 2 member 4 (299 aa).

The Extracellular portion of the chain corresponds to 1-9 (MLRLFYFSA). Residues 10-30 (IIASVILNFVGIIMNLFITVV) traverse the membrane as a helical segment. Topologically, residues 31–46 (NCKTWVKSHRISSSDR) are cytoplasmic. Residues 47–67 (ILFSLGITRFLMLGLFLVNTI) traverse the membrane as a helical segment. The Extracellular portion of the chain corresponds to 68 to 81 (YFVSSNTERSVYLS). A helical membrane pass occupies residues 82-102 (AFFVLCFMFLDSSSVWFVTLL). Topologically, residues 103–131 (NILYCVKITNFQHSVFLLLKRNISPKIPR) are cytoplasmic. Residues 132–152 (LLLACVLISAFTTCLYITLSQ) form a helical membrane-spanning segment. The Extracellular portion of the chain corresponds to 153–172 (ASPFPELVTTRNNTSFNISE). Residues asparagine 164, asparagine 165, and asparagine 169 are each glycosylated (N-linked (GlcNAc...) asparagine). Residues 173-193 (GILSLVVSLVLSSSLQFIINV) form a helical membrane-spanning segment. The Cytoplasmic segment spans residues 194–230 (TSASLLIHSLRRHIQKMQKNATGFWNPQTEAHVGAMK). Residues 231–251 (LMVYFLILYIPYSVATLVQYL) form a helical membrane-spanning segment. At 252–262 (PFYAGMDMGTK) the chain is on the extracellular side. The chain crosses the membrane as a helical span at residues 263–283 (SICLIFATLYSPGHSVLIIIT). The Cytoplasmic segment spans residues 284 to 299 (HPKLKTTAKKILCFKK).

Belongs to the G-protein coupled receptor T2R family. Expressed in subsets of taste receptor cells of the tongue and palate epithelium and exclusively in gustducin-positive cells. Expressed on airway ciliated epithelium.

Its subcellular location is the membrane. The protein localises to the cell projection. It localises to the cilium membrane. Its function is as follows. Gustducin-coupled receptor for denatonium and N(6)-propyl-2-thiouracil implicated in the perception of bitter compounds in the oral cavity and the gastrointestinal tract. Signals through PLCB2 and the calcium-regulated cation channel TRPM5. In airway epithelial cells, binding of denatonium increases the intracellular calcium ion concentration and stimulates ciliary beat frequency. This Homo sapiens (Human) protein is Taste receptor type 2 member 4 (TAS2R4).